Consider the following 248-residue polypeptide: Pyridoxine 5'-phosphate synthase (248 aa).

3-amino-2-oxopropyl phosphate is bound at residue asparagine 12. 14–15 (DH) contributes to the 1-deoxy-D-xylulose 5-phosphate binding site. A 3-amino-2-oxopropyl phosphate-binding site is contributed by arginine 23. Residue histidine 48 is the Proton acceptor of the active site. Residues arginine 50 and histidine 55 each coordinate 1-deoxy-D-xylulose 5-phosphate. The active-site Proton acceptor is the glutamate 75. Residue threonine 105 coordinates 1-deoxy-D-xylulose 5-phosphate. The active-site Proton donor is histidine 196. 3-amino-2-oxopropyl phosphate-binding positions include glycine 197 and 218–219 (GH).

This sequence belongs to the PNP synthase family. In terms of assembly, homooctamer; tetramer of dimers.

It is found in the cytoplasm. It carries out the reaction 3-amino-2-oxopropyl phosphate + 1-deoxy-D-xylulose 5-phosphate = pyridoxine 5'-phosphate + phosphate + 2 H2O + H(+). Its pathway is cofactor biosynthesis; pyridoxine 5'-phosphate biosynthesis; pyridoxine 5'-phosphate from D-erythrose 4-phosphate: step 5/5. Its function is as follows. Catalyzes the complicated ring closure reaction between the two acyclic compounds 1-deoxy-D-xylulose-5-phosphate (DXP) and 3-amino-2-oxopropyl phosphate (1-amino-acetone-3-phosphate or AAP) to form pyridoxine 5'-phosphate (PNP) and inorganic phosphate. The chain is Pyridoxine 5'-phosphate synthase from Pseudomonas fluorescens (strain ATCC BAA-477 / NRRL B-23932 / Pf-5).